The chain runs to 1179 residues: Protein FAM83H (1179 aa).

Residues 1–286 (MARRSQSSSQ…LFAQSEPLVP (286 aa)) are DUF1669. The interval 1–286 (MARRSQSSSQ…LFAQSEPLVP (286 aa)) is mediates interaction with CSNK1A1 and is required for FAM83H activity in keratin cytoskeleton organization. Phosphothreonine is present on threonine 465. Disordered regions lie at residues 484–577 (ADPD…GRAG) and 636–669 (FPTKVPVPGPGSGGNGPEREGPEEPGLAKQDSFR). Phosphoserine occurs at positions 513, 514, 516, 523, 647, and 667. Phosphothreonine is present on threonine 756. A phosphoserine mark is found at serine 759, serine 785, and serine 813. The segment at 830-1026 (RLPSRFLSAQ…RGPRARLSSA (197 aa)) is disordered. Over residues 836-847 (LSAQSHSTSPQG) the composition is skewed to polar residues. Serine 870 and serine 881 each carry phosphoserine. Threonine 883 carries the phosphothreonine modification. Residues 884-906 (PGFSTRRGSPTTGFIEQKGSPTS) show a composition bias toward polar residues. The residue at position 892 (serine 892) is a Phosphoserine. Threonine 894 bears the Phosphothreonine mark. Serine 903, serine 914, serine 925, serine 936, serine 945, serine 1003, serine 1009, serine 1024, and serine 1025 each carry phosphoserine. Threonine 1040 bears the Phosphothreonine mark. Disordered regions lie at residues 1047 to 1084 (ISAHGQKHRAVPAPSPGPTHNSPELGRPPAAGVLAPDM) and 1143 to 1165 (EEASSPGAGEGPAEEGTRDSKVG). A phosphoserine mark is found at serine 1048, serine 1068, and serine 1147.

This sequence belongs to the FAM83 family. As to quaternary structure, directly interacts (via DUF1669) with casein kinase isoforms CSNK1A1, CSNK1A1L, CSNK1D and CSNK1E. Interaction with CSNK1A1 recruits CSNK1A1 to keratin filaments. Interacts with KRT18 and probably other keratins. In terms of tissue distribution, expressed in the tooth follicle.

The protein localises to the cytoplasm. It is found in the cytoskeleton. Functionally, may play a major role in the structural organization and calcification of developing enamel. May play a role in keratin cytoskeleton disassembly by recruiting CSNK1A1 to keratin filaments. Thereby, it may regulate epithelial cell migration. The protein is Protein FAM83H of Homo sapiens (Human).